Consider the following 358-residue polypeptide: Photosystem II protein D1 2 (358 aa).

Transmembrane regions (helical) follow at residues 28–45 (YVGW…AATI), 117–132 (HFLI…QWEL), and 141–155 (WICV…AAMA). His117 is a binding site for chlorophyll a. Tyr125 lines the pheophytin a pocket. Asp169 and Glu188 together coordinate [CaMn4O5] cluster. A helical transmembrane segment spans residues 196–217 (FHMLGVAGVFGGSLFSAMHGSL). His197 contributes to the chlorophyll a binding site. Residues His214 and 263-264 (SF) contribute to the a quinone site. Position 214 (His214) interacts with Fe cation. His271 is a Fe cation binding site. Residues 273-287 (FLGAWPVVGIWFTSM) traverse the membrane as a helical segment. Residues His331, Glu332, Asp341, and Ala343 each coordinate [CaMn4O5] cluster. Positions 344 to 358 (TVESTPVALQAPAIG) are excised as a propeptide.

It belongs to the reaction center PufL/M/PsbA/D family. PSII is composed of 1 copy each of membrane proteins PsbA, PsbB, PsbC, PsbD, PsbE, PsbF, PsbH, PsbI, PsbJ, PsbK, PsbL, PsbM, PsbT, PsbX, PsbY, PsbZ, Psb30/Ycf12, peripheral proteins PsbO, CyanoQ (PsbQ), PsbU, PsbV and a large number of cofactors. It forms dimeric complexes. It depends on The D1/D2 heterodimer binds P680, chlorophylls that are the primary electron donor of PSII, and subsequent electron acceptors. It shares a non-heme iron and each subunit binds pheophytin, quinone, additional chlorophylls, carotenoids and lipids. D1 provides most of the ligands for the Mn4-Ca-O5 cluster of the oxygen-evolving complex (OEC). There is also a Cl(-1) ion associated with D1 and D2, which is required for oxygen evolution. The PSII complex binds additional chlorophylls, carotenoids and specific lipids. as a cofactor. Tyr-160 forms a radical intermediate that is referred to as redox-active TyrZ, YZ or Y-Z. In terms of processing, C-terminally processed by CtpA; processing is essential to allow assembly of the oxygen-evolving complex and thus photosynthetic growth.

Its subcellular location is the cellular thylakoid membrane. It carries out the reaction 2 a plastoquinone + 4 hnu + 2 H2O = 2 a plastoquinol + O2. Photosystem II (PSII) is a light-driven water:plastoquinone oxidoreductase that uses light energy to abstract electrons from H(2)O, generating O(2) and a proton gradient subsequently used for ATP formation. It consists of a core antenna complex that captures photons, and an electron transfer chain that converts photonic excitation into a charge separation. The D1/D2 (PsbA/PsbD) reaction center heterodimer binds P680, the primary electron donor of PSII as well as several subsequent electron acceptors. This Parasynechococcus marenigrum (strain WH8102) protein is Photosystem II protein D1 2.